The chain runs to 1407 residues: DNA-directed RNA polymerase subunit beta' (1407 aa).

4 residues coordinate Zn(2+): Cys-70, Cys-72, Cys-85, and Cys-88. 3 residues coordinate Mg(2+): Asp-458, Asp-460, and Asp-462. Zn(2+) contacts are provided by Cys-814, Cys-888, Cys-895, and Cys-898.

Belongs to the RNA polymerase beta' chain family. The RNAP catalytic core consists of 2 alpha, 1 beta, 1 beta' and 1 omega subunit. When a sigma factor is associated with the core the holoenzyme is formed, which can initiate transcription. Mg(2+) serves as cofactor. The cofactor is Zn(2+).

It catalyses the reaction RNA(n) + a ribonucleoside 5'-triphosphate = RNA(n+1) + diphosphate. DNA-dependent RNA polymerase catalyzes the transcription of DNA into RNA using the four ribonucleoside triphosphates as substrates. This chain is DNA-directed RNA polymerase subunit beta', found in Leptothrix cholodnii (strain ATCC 51168 / LMG 8142 / SP-6) (Leptothrix discophora (strain SP-6)).